Consider the following 218-residue polypeptide: Glycoprotein UL1 (218 aa).

A signal peptide spans 1-27; that stretch reads MGVQCNSKLLLLAVLITIILSSILVQA. A helical membrane pass occupies residues 178-198; sequence VATHVGWTATVVIIICVLTYV.

The protein belongs to the RL11 family.

It localises to the virion membrane. This is Glycoprotein UL1 (UL1) from Homo sapiens (Human).